We begin with the raw amino-acid sequence, 407 residues long: Argininosuccinate synthase (407 aa).

Residues 10–18 and A37 each bind ATP; that span reads AYSGGLDTS. 2 residues coordinate L-citrulline: Y88 and S93. G118 provides a ligand contact to ATP. L-aspartate-binding residues include T120, N124, and D125. N124 provides a ligand contact to L-citrulline. Positions 128, 179, 188, 264, and 276 each coordinate L-citrulline.

It belongs to the argininosuccinate synthase family. Type 1 subfamily. In terms of assembly, homotetramer.

It is found in the cytoplasm. The catalysed reaction is L-citrulline + L-aspartate + ATP = 2-(N(omega)-L-arginino)succinate + AMP + diphosphate + H(+). Its pathway is amino-acid biosynthesis; L-arginine biosynthesis; L-arginine from L-ornithine and carbamoyl phosphate: step 2/3. In Jannaschia sp. (strain CCS1), this protein is Argininosuccinate synthase.